The chain runs to 500 residues: Glycerol kinase (500 aa).

Thr13 serves as a coordination point for ADP. 3 residues coordinate ATP: Thr13, Thr14, and Ser15. Position 13 (Thr13) interacts with sn-glycerol 3-phosphate. An ADP-binding site is contributed by Arg17. Sn-glycerol 3-phosphate-binding residues include Arg83, Glu84, Tyr135, and Asp244. Residues Arg83, Glu84, Tyr135, Asp244, and Gln245 each coordinate glycerol. Residues Thr266 and Gly309 each coordinate ADP. ATP is bound by residues Thr266, Gly309, Gln313, and Gly410. Residues Gly410 and Asn414 each coordinate ADP.

The protein belongs to the FGGY kinase family.

It catalyses the reaction glycerol + ATP = sn-glycerol 3-phosphate + ADP + H(+). It participates in polyol metabolism; glycerol degradation via glycerol kinase pathway; sn-glycerol 3-phosphate from glycerol: step 1/1. Its activity is regulated as follows. Inhibited by fructose 1,6-bisphosphate (FBP). In terms of biological role, key enzyme in the regulation of glycerol uptake and metabolism. Catalyzes the phosphorylation of glycerol to yield sn-glycerol 3-phosphate. The sequence is that of Glycerol kinase from Burkholderia vietnamiensis (strain G4 / LMG 22486) (Burkholderia cepacia (strain R1808)).